Consider the following 491-residue polypeptide: Serralysin (491 aa).

Positions Met1 to Ser16 are excised as a propeptide. His186 is a binding site for Zn(2+). Glu187 is a catalytic residue. His190, His196, and Tyr226 together coordinate Zn(2+). Ca(2+)-binding residues include Arg263, Gly265, Asp295, Gly297, Gly298, Asp300, Thr337, Glu339, Gly344, Gly346, Asp348, Asn353, Ala355, Asn357, Gly361, Gly362, Gly364, Asp366, Gly370, Gly373, Asp384, Gly388, Gly389, Gly391, Asp402, Asp409, and Asp419. Hemolysin-type calcium-binding repeat units follow at residues Ile342–Leu359, Ile360–Ile377, and Tyr378–Phe395.

The protein belongs to the peptidase M10B family. Ca(2+) is required as a cofactor. Requires Zn(2+) as cofactor.

It is found in the secreted. The catalysed reaction is Preferential cleavage of bonds with hydrophobic residues in P1'.. Ca(2+) increases protease activity. Its function is as follows. One of the virulence factors produced during swarmer cell differentiation of the bacteria, which seems to be associated with pathogenesis. The protease activity is limited to IgA1, IgA2, as well as IgG degradation. The chain is Serralysin (zapA) from Proteus mirabilis.